The primary structure comprises 91 residues: MSKIEALAPKPFLYDLKGKKIAVRLKWGGMEYRGILASVDSYMNLQLAATEEWIDGANKGPLGEVLIRCNNVLFVRGIDDEQQQSQQQQQE.

The 74-residue stretch at 8 to 81 folds into the Sm domain; the sequence is APKPFLYDLK…VLFVRGIDDE (74 aa).

Belongs to the snRNP Sm proteins family. SmF/LSm6 subfamily. As to quaternary structure, core component of the spliceosomal U1, U2, U4 and U5 small nuclear ribonucleoproteins (snRNPs), the building blocks of the spliceosome. Most spliceosomal snRNPs contain a common set of Sm proteins, SNRPB, SNRPD1, SNRPD2, SNRPD3, SNRPE, SNRPF and SNRPG that assemble in a heptameric protein ring on the Sm site of the small nuclear RNA to form the core snRNP. Component of the U1 snRNP. Component of the U4/U6-U5 tri-snRNP complex. Component of the U7 snRNP complex. Component of the U11/U12 snRNPs that are part of the U12-type spliceosome. Part of the SMN-Sm complex that catalyzes core snRNPs assembly.

It localises to the cytoplasm. The protein localises to the cytosol. Its subcellular location is the nucleus. Plays a role in pre-mRNA splicing as a core component of the spliceosomal U1, U2, U4 and U5 small nuclear ribonucleoproteins (snRNPs), the building blocks of the spliceosome. Component of both the pre-catalytic spliceosome B complex and activated spliceosome C complexes. Is also a component of the minor U12 spliceosome. This Dictyostelium discoideum (Social amoeba) protein is Small nuclear ribonucleoprotein F (snrpf).